The primary structure comprises 205 residues: ATP phosphoribosyltransferase (205 aa).

This sequence belongs to the ATP phosphoribosyltransferase family. Short subfamily. In terms of assembly, heteromultimer composed of HisG and HisZ subunits.

It is found in the cytoplasm. The catalysed reaction is 1-(5-phospho-beta-D-ribosyl)-ATP + diphosphate = 5-phospho-alpha-D-ribose 1-diphosphate + ATP. The protein operates within amino-acid biosynthesis; L-histidine biosynthesis; L-histidine from 5-phospho-alpha-D-ribose 1-diphosphate: step 1/9. In terms of biological role, catalyzes the condensation of ATP and 5-phosphoribose 1-diphosphate to form N'-(5'-phosphoribosyl)-ATP (PR-ATP). Has a crucial role in the pathway because the rate of histidine biosynthesis seems to be controlled primarily by regulation of HisG enzymatic activity. This is ATP phosphoribosyltransferase from Leptospira borgpetersenii serovar Hardjo-bovis (strain JB197).